Reading from the N-terminus, the 208-residue chain is Small ribosomal subunit protein uS3 (208 aa).

One can recognise a KH type-2 domain in the interval 16–85; that stretch reads VDEYLKNKLP…KPQIEVKQIE (70 aa).

Belongs to the universal ribosomal protein uS3 family. In terms of assembly, part of the 30S ribosomal subunit.

Functionally, binds the lower part of the 30S subunit head. The protein is Small ribosomal subunit protein uS3 of Methanococcus aeolicus (strain ATCC BAA-1280 / DSM 17508 / OCM 812 / Nankai-3).